The chain runs to 253 residues: Ribosome maturation factor RimP (253 aa).

The span at 186–199 (RRGKAAEREKKRDL) shows a compositional bias: basic and acidic residues. The tract at residues 186–253 (RRGKAAEREK…RARRGEIDPD (68 aa)) is disordered. Positions 201–216 (LAPPLAPHAKPAAQAK) are enriched in low complexity. Positions 240-253 (LAADRARRGEIDPD) are enriched in basic and acidic residues.

This sequence belongs to the RimP family.

Its subcellular location is the cytoplasm. Required for maturation of 30S ribosomal subunits. The chain is Ribosome maturation factor RimP from Bradyrhizobium sp. (strain BTAi1 / ATCC BAA-1182).